The following is a 341-amino-acid chain: MGNTTSCCVSSSPKLRRNAHSRLESYRPDTDLSREDTGCNLQHISDRENIDDLNMEFNPSDHPRASTIFLSKSQTDVREKRKSLFINHHPPGQIARKYSSCSTIFLDDSTVSQPNLKYTIKCVALAIYYHIKNRDPDGRMLLDIFDENLHPLSKSEVPPDYDKHNPEQKQIYRFVRTLFSAAQLTAECAIVTLVYLERLLTYAEIDICPANWKRIVLGAILLASKVWDDQAVWNVDYCQILKDITVEDMNELERQFLELLQFNINVPSSVYAKYYFDLRSLAEANNLSFPLEPLSRERAHKLEAISRLCEDKYKDLRRSARKRSASADNLTLPRWSPAIIS.

The N-myristoyl glycine moiety is linked to residue Gly2. Residues Ser21 and Ser25 each carry the phosphoserine modification. At Thr30 the chain carries Phosphothreonine. The residue at position 33 (Ser33) is a Phosphoserine. A Phosphothreonine modification is found at Thr37. Phosphothreonine; by CDK14 is present on Thr67. 2 positions are modified to phosphoserine; by CDK14: Ser71 and Ser73. Phosphothreonine is present on Thr75. Ser83 carries the phosphoserine; by CDK14 modification. Residues Ser99, Ser100, and Ser102 each carry the phosphoserine modification. The Cyclin N-terminal domain maps to 143 to 265; the sequence is DIFDENLHPL…FLELLQFNIN (123 aa). Position 280 is a phosphoserine (Ser280). Phosphoserine; by CDK14 occurs at positions 288 and 295. Phosphoserine is present on residues Ser324 and Ser326. Residue Thr331 is modified to Phosphothreonine.

It belongs to the cyclin family. Cyclin Y subfamily. In terms of assembly, found in a complex with CAPRIN2, LRP6 and CDK14 during G2/M stage; CAPRIN2 functions as a scaffold for the complex by binding to CCNY via its N terminus and to CDK14 via its C terminus. Interacts with CDK14. Interacts with CDK16. Interacts with LRP6. Ubiquitinated; leading to its degradation. Post-translationally, heavily phosphorylated. Phosphorylation at Ser-71 and Ser-73 by CDK14 is enhanced during the G2 and M cell cycle phases, and creates a phosphodegron triggering SCF-dependent ubiquitination. In terms of tissue distribution, widely expressed.

It localises to the cell membrane. The protein resides in the nucleus. In terms of biological role, positive regulatory subunit of the cyclin-dependent kinases CDK14/PFTK1 and CDK16. Acts as a cell-cycle regulator of Wnt signaling pathway during G2/M phase by recruiting CDK14/PFTK1 to the plasma membrane and promoting phosphorylation of LRP6, leading to the activation of the Wnt signaling pathway. Recruits CDK16 to the plasma membrane. Isoform 3 might play a role in the activation of MYC-mediated transcription. The sequence is that of Cyclin-Y (CCNY) from Homo sapiens (Human).